A 465-amino-acid polypeptide reads, in one-letter code: Ribulose bisphosphate carboxylase large chain (465 aa).

Lysine 4 carries the post-translational modification N6,N6,N6-trimethyllysine. Residues asparagine 113 and threonine 163 each contribute to the substrate site. Lysine 165 (proton acceptor) is an active-site residue. Residue lysine 167 participates in substrate binding. The Mg(2+) site is built by lysine 191, aspartate 193, and glutamate 194. The residue at position 191 (lysine 191) is an N6-carboxylysine. Histidine 284 acts as the Proton acceptor in catalysis. 3 residues coordinate substrate: arginine 285, histidine 317, and serine 369.

This sequence belongs to the RuBisCO large chain family. Type I subfamily. As to quaternary structure, heterohexadecamer of 8 large chains and 8 small chains; disulfide-linked. The disulfide link is formed within the large subunit homodimers. Mg(2+) is required as a cofactor. Post-translationally, the disulfide bond which can form in the large chain dimeric partners within the hexadecamer appears to be associated with oxidative stress and protein turnover.

The protein localises to the plastid. It is found in the chloroplast. The enzyme catalyses 2 (2R)-3-phosphoglycerate + 2 H(+) = D-ribulose 1,5-bisphosphate + CO2 + H2O. It catalyses the reaction D-ribulose 1,5-bisphosphate + O2 = 2-phosphoglycolate + (2R)-3-phosphoglycerate + 2 H(+). In terms of biological role, ruBisCO catalyzes two reactions: the carboxylation of D-ribulose 1,5-bisphosphate, the primary event in carbon dioxide fixation, as well as the oxidative fragmentation of the pentose substrate in the photorespiration process. Both reactions occur simultaneously and in competition at the same active site. This Epacris sp protein is Ribulose bisphosphate carboxylase large chain.